The sequence spans 156 residues: Small ribosomal subunit protein uS7 (156 aa).

It belongs to the universal ribosomal protein uS7 family. Part of the 30S ribosomal subunit. Contacts proteins S9 and S11.

One of the primary rRNA binding proteins, it binds directly to 16S rRNA where it nucleates assembly of the head domain of the 30S subunit. Is located at the subunit interface close to the decoding center, probably blocks exit of the E-site tRNA. The polypeptide is Small ribosomal subunit protein uS7 (Parasynechococcus marenigrum (strain WH8102)).